The primary structure comprises 156 residues: Transcriptional repressor NrdR (156 aa).

Residues 3 to 34 fold into a zinc finger; it reads CPFCQHDDTQVLDTRISEEGDSIRRRRRCVSC. Residues 49–139 enclose the ATP-cone domain; that stretch reads PVIVKKNGSR…VYKSFEDVAE (91 aa).

Belongs to the NrdR family. Zn(2+) is required as a cofactor.

Negatively regulates transcription of bacterial ribonucleotide reductase nrd genes and operons by binding to NrdR-boxes. In Herminiimonas arsenicoxydans, this protein is Transcriptional repressor NrdR.